The primary structure comprises 312 residues: Olfactory receptor-like protein COR4 (312 aa).

Residues methionine 1–proline 26 lie on the Extracellular side of the membrane. N-linked (GlcNAc...) asparagine glycosylation is present at asparagine 5. A helical transmembrane segment spans residues leucine 27 to isoleucine 49. Residues serine 50–threonine 57 lie on the Cytoplasmic side of the membrane. The chain crosses the membrane as a helical span at residues proline 58–proline 79. The Extracellular portion of the chain corresponds to lysine 80–glutamine 100. A disulfide bridge connects residues cysteine 97 and cysteine 179. A helical membrane pass occupies residues tyrosine 101 to tyrosine 120. Over aspartate 121–alanine 139 the chain is Cytoplasmic. A helical membrane pass occupies residues valine 140 to leucine 164. At lysine 165 to leucine 205 the chain is on the extracellular side. A helical transmembrane segment spans residues phenylalanine 206–valine 226. Over arginine 227–serine 239 the chain is Cytoplasmic. Residues threonine 240 to leucine 260 traverse the membrane as a helical segment. The Extracellular portion of the chain corresponds to arginine 261–aspartate 271. The helical transmembrane segment at lysine 272–tryptophan 292 threads the bilayer. The Cytoplasmic segment spans residues arginine 293–histidine 312.

The protein belongs to the G-protein coupled receptor 1 family.

Its subcellular location is the cell membrane. Odorant receptor. This chain is Olfactory receptor-like protein COR4 (COR4), found in Gallus gallus (Chicken).